The chain runs to 229 residues: Multiple organellar RNA editing factor 5, chloroplastic/mitochondrial (229 aa).

The transit peptide at 1 to 57 directs the protein to the chloroplast and mitochondrion; it reads MAKTLARSTASRITKRLISTSGATTPSPSYILSRRSTPVFSHAVGFISSLNRFTTIR.

Belongs to the MORF family. In terms of assembly, homodimer and heterodimers with MORF8/RIP1, MORF3/RIP3, MORF6/RIP6, MORF7/RIP7 and MORF9/RIP9.

Its subcellular location is the mitochondrion. It localises to the plastid. The protein resides in the chloroplast. Its function is as follows. Involved in organellar RNA editing. Required for the processing of few RNA editing sites in mitochondria. This chain is Multiple organellar RNA editing factor 5, chloroplastic/mitochondrial, found in Arabidopsis thaliana (Mouse-ear cress).